A 270-amino-acid chain; its full sequence is MIASSAKIHPSSAIEGGAVIGENVKIGPFCHIGPNVVLADEVEILSHVTVIGRTTVGKGTKIFPGAVIGGDSQSMHHSALNTTLVIGENCTIREGVTMNTGTVEHGGATIVGDNNLFLAYSHVAHDCRLGNNIILSNNVMLAGHVTVADRAILGGGSAVHQFTRIGRQAFIGGLSAVSYDVIPYGMLNGNPGLLSGLNVVGMTRAGFDRSTIHRVRRCYKQIFEGDGSIRANAAAIRDEYLDCAPALEILDFIAAESDRALSSPNRGAKG.

It belongs to the transferase hexapeptide repeat family. LpxA subfamily. In terms of assembly, homotrimer.

It localises to the cytoplasm. It catalyses the reaction a (3R)-hydroxyacyl-[ACP] + UDP-N-acetyl-alpha-D-glucosamine = a UDP-3-O-[(3R)-3-hydroxyacyl]-N-acetyl-alpha-D-glucosamine + holo-[ACP]. It participates in glycolipid biosynthesis; lipid IV(A) biosynthesis; lipid IV(A) from (3R)-3-hydroxytetradecanoyl-[acyl-carrier-protein] and UDP-N-acetyl-alpha-D-glucosamine: step 1/6. In terms of biological role, involved in the biosynthesis of lipid A, a phosphorylated glycolipid that anchors the lipopolysaccharide to the outer membrane of the cell. The chain is Acyl-[acyl-carrier-protein]--UDP-N-acetylglucosamine O-acyltransferase from Sinorhizobium medicae (strain WSM419) (Ensifer medicae).